A 230-amino-acid chain; its full sequence is Ethylene-responsive transcription factor ERF012 (230 aa).

The span at 1–17 (MVKQERKIQTSSTKKEM) shows a compositional bias: basic and acidic residues. The segment at 1–51 (MVKQERKIQTSSTKKEMPLSSSPSSSSSSSSSSSSSSCKNKNKKSKIKKYK) is disordered. Positions 20–39 (SSSPSSSSSSSSSSSSSSCK) are enriched in low complexity. Basic residues predominate over residues 40 to 51 (NKNKKSKIKKYK). The AP2/ERF DNA-binding region spans 49–106 (KYKGVRMRSWGSWVSEIRAPNQKTRIWLGSYSTAEAAARAYDVALLCLKGPQANLNFP).

It belongs to the AP2/ERF transcription factor family. ERF subfamily. Expressed cotyledons, ovules and seeds of immature siliques.

The protein localises to the nucleus. In terms of biological role, transcriptional activator involved in the regulation of plant development and tolerance to abiotic stresses. Involved in salt and osmotic stress response pathways. May be regulated by the stress-related genes RD29A, RD22, DREB1A or P5CS during stress response. Binds to the GCC-box pathogenesis-related promoter element. May be involved in the regulation of gene expression by stress factors and by components of stress signal transduction pathways. In Arabidopsis thaliana (Mouse-ear cress), this protein is Ethylene-responsive transcription factor ERF012 (ERF012).